The sequence spans 730 residues: Dual function macrocyclase-peptidase POPB (730 aa).

Active-site charge relay system residues include Ser577, Asp661, and His698.

The protein belongs to the peptidase S9A family. As to quaternary structure, monomer. In terms of tissue distribution, expressed in the pileus (cap) and lamellae where it colocalizes with amanitin.

The enzyme catalyses Hydrolysis of Pro-|-Xaa &gt;&gt; Ala-|-Xaa in oligopeptides.. Dual function macrocyclase-peptidase involved in the biosynthesis of the highly toxic amanitin toxin family of macrocycles. Cleaves peptide bonds on the C-terminal side of prolyl residues. The enzyme first removes 10 residues from the N-terminus of a 35-residue substrate. Conformational trapping of the 25 amino-acid peptide forces the enzyme to release this intermediate rather than proceed to macrocyclization. The enzyme rebinds the 25 amino-acid peptide in a different conformation and catalyzes macrocyclization of the N-terminal eight residues. The sequence is that of Dual function macrocyclase-peptidase POPB from Amanita bisporigera (Destroying angel).